The sequence spans 110 residues: Heat shock protein Hsp-12.2 (110 aa).

Residues 15-110 (DWPLQHNDGV…VLTITASKKA (96 aa)) form the sHSP domain.

It belongs to the small heat shock protein (HSP20) family.

In Caenorhabditis elegans, this protein is Heat shock protein Hsp-12.2 (hsp-12.2).